A 636-amino-acid chain; its full sequence is Topoisomerase I damage affected protein 7 (636 aa).

The span at 1 to 18 shows a compositional bias: polar residues; it reads MNSNSTIGRTTLGESDTI. Disordered regions lie at residues 1–33, 87–109, 246–271, 299–326, and 339–362; these read MNSN…NSRS, TLVS…QYDP, NKDT…SSTN, PTSS…DDTT, and QSTT…STSP. N-linked (GlcNAc...) asparagine glycosylation is present at Asn-4. Composition is skewed to low complexity over residues 19 to 33 and 87 to 108; these read SLSF…NSRS and TLVS…SQYD. An N-linked (GlcNAc...) asparagine glycan is attached at Asn-257. A helical membrane pass occupies residues 457 to 477; that stretch reads IVGSVVGSVGGILICVLVVWF. An N-linked (GlcNAc...) asparagine glycan is attached at Asn-492. Polar residues predominate over residues 510–541; that stretch reads QAKEASLQAQDSGSQQRNTETASANNPFSNEF. The tract at residues 510–551 is disordered; the sequence is QAKEASLQAQDSGSQQRNTETASANNPFSNEFNFKARGNPPP. Lys-512 participates in a covalent cross-link: Glycyl lysine isopeptide (Lys-Gly) (interchain with G-Cter in ubiquitin). N-linked (GlcNAc...) asparagine glycans are attached at residues Asn-557, Asn-562, and Asn-626. Ser-628 bears the Phosphoserine mark.

It belongs to the TDA7 family.

It is found in the vacuole membrane. The sequence is that of Topoisomerase I damage affected protein 7 (TDA7) from Saccharomyces cerevisiae (strain ATCC 204508 / S288c) (Baker's yeast).